The sequence spans 351 residues: Phospho-N-acetylmuramoyl-pentapeptide-transferase (351 aa).

Helical transmembrane passes span 17-37 (TAYA…FIIS), 61-83 (MGIP…FFWI), 88-105 (IYFL…CLGF), 130-150 (ILFS…HVSI), 158-178 (SLKL…LISA), 190-210 (GLAI…AYLT), 230-250 (LVIF…FNAY), 254-274 (IMMG…VALI), 279-299 (ILFA…IIQV), and 328-348 (QVVI…LSTI).

This sequence belongs to the glycosyltransferase 4 family. MraY subfamily. Requires Mg(2+) as cofactor.

The protein resides in the cell inner membrane. It carries out the reaction UDP-N-acetyl-alpha-D-muramoyl-L-alanyl-gamma-D-glutamyl-meso-2,6-diaminopimeloyl-D-alanyl-D-alanine + di-trans,octa-cis-undecaprenyl phosphate = di-trans,octa-cis-undecaprenyl diphospho-N-acetyl-alpha-D-muramoyl-L-alanyl-D-glutamyl-meso-2,6-diaminopimeloyl-D-alanyl-D-alanine + UMP. Its pathway is cell wall biogenesis; peptidoglycan biosynthesis. Catalyzes the initial step of the lipid cycle reactions in the biosynthesis of the cell wall peptidoglycan: transfers peptidoglycan precursor phospho-MurNAc-pentapeptide from UDP-MurNAc-pentapeptide onto the lipid carrier undecaprenyl phosphate, yielding undecaprenyl-pyrophosphoryl-MurNAc-pentapeptide, known as lipid I. This is Phospho-N-acetylmuramoyl-pentapeptide-transferase from Borrelia recurrentis (strain A1).